Reading from the N-terminus, the 293-residue chain is Putative ribose uptake protein RbsU (293 aa).

Transmembrane regions (helical) follow at residues 5-24, 34-51, 58-80, 95-114, 121-138, 153-170, 177-199, 212-234, 241-263, and 273-292; these read ALLIGLGPLIGWGFFPTVAS, IIGATVGTLIFAIILAVV, TGTNLLFALLSGAGWGFGQIITF, TTAFQLLGASLWGVFALGNW, IIGFTALVVILIGARMTV, RAVVLLLIGEFGYWLYSA, IDGLTAFLPQAMGMVIVAVIYGF, ITWLQIISGFFFAFGALTYLISA, LATGFILSQTSVVLATLTGIYFL, and VITIIGLVLILVAASVTVFI.

This sequence belongs to the GRP transporter (TC 2.A.7.5) family.

Its subcellular location is the cell membrane. Could be involved in the uptake of ribose. The sequence is that of Putative ribose uptake protein RbsU (rbsU) from Staphylococcus aureus (strain COL).